Consider the following 806-residue polypeptide: Leucine--tRNA ligase (806 aa).

Residues 38 to 48 carry the 'HIGH' region motif; that stretch reads PYPSGEIHMGH. Positions 572–576 match the 'KMSKS' region motif; sequence KMSKS. Lys-575 serves as a coordination point for ATP.

Belongs to the class-I aminoacyl-tRNA synthetase family.

The protein resides in the cytoplasm. It catalyses the reaction tRNA(Leu) + L-leucine + ATP = L-leucyl-tRNA(Leu) + AMP + diphosphate. The sequence is that of Leucine--tRNA ligase from Helicobacter pylori (strain HPAG1).